The chain runs to 339 residues: MHVLDGSSGGGQLVRTALTCAAVSGESFRMRYVRRARSNPGLQAQHCAAVNAVADICDAATDGVEVGSEAFSFEPEVAAEEADDDEEPTLGGTTSVEVGTAGSIPLVFDSLLPLAGALDEPITATLTGGTDAKWAPPMDYFQHVKLPLLREHGIDATVSVDRRGFYPRGGGEATLTVEPSTPTPITLTERGDREALTAYSVAESSLADDEVAEQQATAAAPDAAHEIAYTDADSAGSAVVLAAEYEHSRAGFAALGERGVSADAVGENAADALAAFESGPGAVDSHLADQLVPVVAVAGGEVRAPEVTTHIETCVDLLAEFDYDIDIEHTDDGAVVLSA.

Residues aspartate 109 and 286-290 (HLADQ) each bind ATP. Histidine 310 serves as the catalytic Tele-AMP-histidine intermediate.

The protein belongs to the RNA 3'-terminal cyclase family. Type 1 subfamily.

It localises to the cytoplasm. It catalyses the reaction a 3'-end 3'-phospho-ribonucleotide-RNA + ATP = a 3'-end 2',3'-cyclophospho-ribonucleotide-RNA + AMP + diphosphate. In terms of biological role, catalyzes the conversion of 3'-phosphate to a 2',3'-cyclic phosphodiester at the end of RNA. The mechanism of action of the enzyme occurs in 3 steps: (A) adenylation of the enzyme by ATP; (B) transfer of adenylate to an RNA-N3'P to produce RNA-N3'PP5'A; (C) and attack of the adjacent 2'-hydroxyl on the 3'-phosphorus in the diester linkage to produce the cyclic end product. The biological role of this enzyme is unknown but it is likely to function in some aspects of cellular RNA processing. The sequence is that of RNA 3'-terminal phosphate cyclase from Halobacterium salinarum (strain ATCC 29341 / DSM 671 / R1).